Here is a 312-residue protein sequence, read N- to C-terminus: Elongation factor Ts (312 aa).

Residues 80–83 form an involved in Mg(2+) ion dislocation from EF-Tu region; that stretch reads TDFV.

This sequence belongs to the EF-Ts family.

The protein localises to the cytoplasm. Associates with the EF-Tu.GDP complex and induces the exchange of GDP to GTP. It remains bound to the aminoacyl-tRNA.EF-Tu.GTP complex up to the GTP hydrolysis stage on the ribosome. This chain is Elongation factor Ts, found in Maricaulis maris (strain MCS10) (Caulobacter maris).